The chain runs to 101 residues: Small ribosomal subunit protein bS18c (101 aa).

It belongs to the bacterial ribosomal protein bS18 family. As to quaternary structure, part of the 30S ribosomal subunit.

Its subcellular location is the plastid. It is found in the chloroplast. In Arabidopsis thaliana (Mouse-ear cress), this protein is Small ribosomal subunit protein bS18c (rps18).